A 540-amino-acid chain; its full sequence is (13S,14R)-13-O-acetyl-1-hydroxy-N-methylcanadine 8-hydroxylase CYP82X1 (540 aa).

The helical transmembrane segment at 15 to 35 (FSIILVTTVSIVLLYSVFFWV) threads the bilayer. Residue Cys-483 participates in heme binding.

It belongs to the cytochrome P450 family. Requires heme as cofactor. Highly expressed in capsules. Expressed is stems.

The protein resides in the membrane. The catalysed reaction is (13S,14R)-13-O-acetyl-1-hydroxy-N-methylcanadine + reduced [NADPH--hemoprotein reductase] + O2 = (13S,14R)-13-O-acetyl-1,8-dihydroxy-N-methylcanadine + oxidized [NADPH--hemoprotein reductase] + H2O + H(+). The protein operates within alkaloid biosynthesis. Its function is as follows. Cytochrome P450 involved in the biosynthesis of the benzylisoquinoline alkaloid noscapine. Converts (13S,14R)-13-O-acetyl-1-hydroxy-N-methylcanadine to (13S,14R)-13-O-acetyl-1,8-dihydroxy-N-methylcanadine. This is (13S,14R)-13-O-acetyl-1-hydroxy-N-methylcanadine 8-hydroxylase CYP82X1 from Papaver somniferum (Opium poppy).